Reading from the N-terminus, the 171-residue chain is ATP synthase subunit b (171 aa).

The chain crosses the membrane as a helical span at residues 4–24; it reads IAFFVICVGFPSLIFASASIQ.

The protein belongs to the ATPase B chain family. F-type ATPases have 2 components, F(1) - the catalytic core - and F(0) - the membrane proton channel. F(1) has five subunits: alpha(3), beta(3), gamma(1), delta(1), epsilon(1). F(0) has three main subunits: a(1), b(2) and c(10-14). The alpha and beta chains form an alternating ring which encloses part of the gamma chain. F(1) is attached to F(0) by a central stalk formed by the gamma and epsilon chains, while a peripheral stalk is formed by the delta and b chains.

The protein resides in the cell inner membrane. F(1)F(0) ATP synthase produces ATP from ADP in the presence of a proton or sodium gradient. F-type ATPases consist of two structural domains, F(1) containing the extramembraneous catalytic core and F(0) containing the membrane proton channel, linked together by a central stalk and a peripheral stalk. During catalysis, ATP synthesis in the catalytic domain of F(1) is coupled via a rotary mechanism of the central stalk subunits to proton translocation. In terms of biological role, component of the F(0) channel, it forms part of the peripheral stalk, linking F(1) to F(0). The chain is ATP synthase subunit b from Helicobacter hepaticus (strain ATCC 51449 / 3B1).